Reading from the N-terminus, the 354-residue chain is Hydrophobic dipeptide epimerase (354 aa).

Substrate-binding positions include threonine 134, lysine 159, and 159–161 (KIK). Residue aspartate 189 coordinates Mg(2+). Asparagine 191 is a substrate binding site. Positions 215 and 240 each coordinate Mg(2+). Residues lysine 264, 292-295 (CMAE), and 318-320 (DLD) each bind substrate.

The protein belongs to the mandelate racemase/muconate lactonizing enzyme family. It depends on Mg(2+) as a cofactor.

Functionally, catalyzes the epimerization of L-Ile-L-Tyr to L-Ile-D-Tyr (in vitro). Catalyzes the epimerization of dipeptides, with a preference for substrates with a hydrophobic or basic amino acid in the first position, followed by an aromatic residue in the second position. Has epimerase activity with L-Ile-L-Tyr, L-Val-L-Tyr and L-Arg-L-Tyr (in vitro). This chain is Hydrophobic dipeptide epimerase, found in Enterococcus faecalis (strain ATCC 700802 / V583).